The chain runs to 307 residues: Acetyl-coenzyme A carboxylase carboxyl transferase subunit beta (307 aa).

The disordered stretch occupies residues 1-26; the sequence is MAMAEPQDPKKGDKKTAERRGGGWLS. Residues 7-21 are compositionally biased toward basic and acidic residues; the sequence is QDPKKGDKKTAERRG. The 263-residue stretch at 45–307 folds into the CoA carboxyltransferase N-terminal domain; the sequence is LWVKCPDTGE…LMMGRKRQAA (263 aa).

It belongs to the AccD/PCCB family. Acetyl-CoA carboxylase is a heterohexamer composed of biotin carboxyl carrier protein (AccB), biotin carboxylase (AccC) and two subunits each of ACCase subunit alpha (AccA) and ACCase subunit beta (AccD).

It localises to the cytoplasm. It catalyses the reaction N(6)-carboxybiotinyl-L-lysyl-[protein] + acetyl-CoA = N(6)-biotinyl-L-lysyl-[protein] + malonyl-CoA. Its pathway is lipid metabolism; malonyl-CoA biosynthesis; malonyl-CoA from acetyl-CoA: step 1/1. Component of the acetyl coenzyme A carboxylase (ACC) complex. Biotin carboxylase (BC) catalyzes the carboxylation of biotin on its carrier protein (BCCP) and then the CO(2) group is transferred by the transcarboxylase to acetyl-CoA to form malonyl-CoA. The protein is Acetyl-coenzyme A carboxylase carboxyl transferase subunit beta of Caulobacter vibrioides (strain ATCC 19089 / CIP 103742 / CB 15) (Caulobacter crescentus).